The following is a 182-amino-acid chain: Crossover junction endodeoxyribonuclease RuvC (182 aa).

Catalysis depends on residues Asp-7, Glu-67, and Asp-139. Residues Asp-7, Glu-67, and Asp-139 each coordinate Mg(2+).

Belongs to the RuvC family. In terms of assembly, homodimer which binds Holliday junction (HJ) DNA. The HJ becomes 2-fold symmetrical on binding to RuvC with unstacked arms; it has a different conformation from HJ DNA in complex with RuvA. In the full resolvosome a probable DNA-RuvA(4)-RuvB(12)-RuvC(2) complex forms which resolves the HJ. The cofactor is Mg(2+).

Its subcellular location is the cytoplasm. It catalyses the reaction Endonucleolytic cleavage at a junction such as a reciprocal single-stranded crossover between two homologous DNA duplexes (Holliday junction).. The RuvA-RuvB-RuvC complex processes Holliday junction (HJ) DNA during genetic recombination and DNA repair. Endonuclease that resolves HJ intermediates. Cleaves cruciform DNA by making single-stranded nicks across the HJ at symmetrical positions within the homologous arms, yielding a 5'-phosphate and a 3'-hydroxyl group; requires a central core of homology in the junction. The consensus cleavage sequence is 5'-(A/T)TT(C/G)-3'. Cleavage occurs on the 3'-side of the TT dinucleotide at the point of strand exchange. HJ branch migration catalyzed by RuvA-RuvB allows RuvC to scan DNA until it finds its consensus sequence, where it cleaves and resolves the cruciform DNA. This is Crossover junction endodeoxyribonuclease RuvC from Bordetella pertussis (strain Tohama I / ATCC BAA-589 / NCTC 13251).